Reading from the N-terminus, the 241-residue chain is Outer membrane protein assembly factor BamD (241 aa).

Residues 1–17 (MKYQTLSGLLALSLLFG) form the signal peptide. The N-palmitoyl cysteine moiety is linked to residue Cys-18. The S-diacylglycerol cysteine moiety is linked to residue Cys-18.

This sequence belongs to the BamD family. Part of the Bam complex.

Its subcellular location is the cell outer membrane. Functionally, part of the outer membrane protein assembly complex, which is involved in assembly and insertion of beta-barrel proteins into the outer membrane. This is Outer membrane protein assembly factor BamD from Vibrio cholerae serotype O1 (strain ATCC 39315 / El Tor Inaba N16961).